A 246-amino-acid polypeptide reads, in one-letter code: Large ribosomal subunit protein uL30 (246 aa).

The protein belongs to the universal ribosomal protein uL30 family.

In terms of biological role, binds to G-rich structures in 28S rRNA and in mRNAs. Plays a regulatory role in the translation apparatus; inhibits cell-free translation of mRNAs. The polypeptide is Large ribosomal subunit protein uL30 (rpl7) (Dictyostelium discoideum (Social amoeba)).